The primary structure comprises 370 residues: ATP/GTP phosphatase (370 aa).

It catalyses the reaction ATP + H2O = ADP + phosphate + H(+). It carries out the reaction GTP + H2O = GDP + phosphate + H(+). Has nucleotide phosphatase activity toward ATP and GTP, but not toward CTP, TTP and ADP. This is ATP/GTP phosphatase from Helicobacter pylori (strain ATCC 700392 / 26695) (Campylobacter pylori).